The following is a 749-amino-acid chain: 5-methyltetrahydropteroyltriglutamate--homocysteine methyltransferase (749 aa).

5-methyltetrahydropteroyltri-L-glutamate contacts are provided by residues 18–21 (REWK) and Lys112. L-homocysteine-binding positions include 420–422 (IGS) and Glu473. Residues 420-422 (IGS) and Glu473 each bind L-methionine. Residue Trp550 participates in 5-methyltetrahydropteroyltri-L-glutamate binding. Asp588 serves as a coordination point for L-homocysteine. Asp588 provides a ligand contact to L-methionine. Glu594 is a 5-methyltetrahydropteroyltri-L-glutamate binding site. 3 residues coordinate Zn(2+): His630, Cys632, and Glu654. The active-site Proton donor is the His683. Cys715 contacts Zn(2+).

The protein belongs to the vitamin-B12 independent methionine synthase family. Requires Zn(2+) as cofactor.

The catalysed reaction is 5-methyltetrahydropteroyltri-L-glutamate + L-homocysteine = tetrahydropteroyltri-L-glutamate + L-methionine. It participates in amino-acid biosynthesis; L-methionine biosynthesis via de novo pathway; L-methionine from L-homocysteine (MetE route): step 1/1. Its function is as follows. Catalyzes the transfer of a methyl group from 5-methyltetrahydrofolate to homocysteine resulting in methionine formation. The sequence is that of 5-methyltetrahydropteroyltriglutamate--homocysteine methyltransferase from Staphylococcus haemolyticus (strain JCSC1435).